The following is a 380-amino-acid chain: Cytochrome b (380 aa).

4 consecutive transmembrane segments (helical) span residues 34–54, 78–99, 114–134, and 179–199; these read FGSL…LLAT, WLIR…YLHI, WNTG…GYVL, and FFAL…IHLA. Positions 84 and 98 each coordinate heme b. 2 residues coordinate heme b: H183 and H197. An a ubiquinone-binding site is contributed by H202. A run of 4 helical transmembrane segments spans residues 227 to 247, 289 to 309, 321 to 341, and 348 to 368; these read LKDI…ALFS, LGGV…PFLH, LSQI…WIGS, and FIII…ILFP.

Belongs to the cytochrome b family. In terms of assembly, the cytochrome bc1 complex contains 11 subunits: 3 respiratory subunits (MT-CYB, CYC1 and UQCRFS1), 2 core proteins (UQCRC1 and UQCRC2) and 6 low-molecular weight proteins (UQCRH/QCR6, UQCRB/QCR7, UQCRQ/QCR8, UQCR10/QCR9, UQCR11/QCR10 and a cleavage product of UQCRFS1). This cytochrome bc1 complex then forms a dimer. The cofactor is heme b.

The protein resides in the mitochondrion inner membrane. Its function is as follows. Component of the ubiquinol-cytochrome c reductase complex (complex III or cytochrome b-c1 complex) that is part of the mitochondrial respiratory chain. The b-c1 complex mediates electron transfer from ubiquinol to cytochrome c. Contributes to the generation of a proton gradient across the mitochondrial membrane that is then used for ATP synthesis. The chain is Cytochrome b (MT-CYB) from Callipepla gambelii (Gambel's quail).